The sequence spans 447 residues: MGSTQLTGRVIFKGDPGYTEAIKNWNPYVDVYPLVFVFAQNSYDVSNAIKWARENKVPLRVRSGRHALDKNLSVVSGGIVIDVSDMNKVFLDEENAIATVQTGIPVGPLVKGLARDGFMAPFGDSPTVGIGGITMGGGFGVLSRSIGLISDNLLALKTVDAKGRIIHADQSHNEDLLWASRGGGGGNFGYNTQYTFKVHRAPKTATVFNIIWPWEQLETVFKAWQKWAPFVDERLGCYLEIYSKINGLCHAEGIFLGSKTELIRLLKPLLHAGTPTEADIKTLYYPDAIDFLDPDEPIPGRNDQSVKFSSAWGHDFWSDEPISIMRKFLEDATGTEANFFFINWGGAISRVPKDETAFFWRHPLFYTEWTASWKNKSQEDSNLASVERVRQLMQPYVAGSYVNVPDQNIENFGKEYYGANFARLREIKAKYDPENVFRFPQSIPPSR.

In terms of domain architecture, FAD-binding PCMH-type spans 29–201 (VDVYPLVFVF…TQYTFKVHRA (173 aa)).

Belongs to the oxygen-dependent FAD-linked oxidoreductase family. It depends on FAD as a cofactor.

The protein resides in the spore coat. This is an uncharacterized protein from Bacillus subtilis (strain 168).